A 556-amino-acid chain; its full sequence is Formate--tetrahydrofolate ligase (556 aa).

65 to 72 (TPAGEGKS) contacts ATP.

This sequence belongs to the formate--tetrahydrofolate ligase family.

The enzyme catalyses (6S)-5,6,7,8-tetrahydrofolate + formate + ATP = (6R)-10-formyltetrahydrofolate + ADP + phosphate. It functions in the pathway one-carbon metabolism; tetrahydrofolate interconversion. This Streptococcus pneumoniae (strain ATCC 700669 / Spain 23F-1) protein is Formate--tetrahydrofolate ligase.